The chain runs to 305 residues: Glycine--tRNA ligase alpha subunit (305 aa).

Belongs to the class-II aminoacyl-tRNA synthetase family. Tetramer of two alpha and two beta subunits.

It localises to the cytoplasm. The catalysed reaction is tRNA(Gly) + glycine + ATP = glycyl-tRNA(Gly) + AMP + diphosphate. The chain is Glycine--tRNA ligase alpha subunit from Streptococcus pneumoniae (strain P1031).